Here is a 1254-residue protein sequence, read N- to C-terminus: Vitamin B12-dependent ribonucleotide reductase (1254 aa).

Substrate is bound by residues serine 153, 198-199 (AC), glycine 230, 474-478 (NPCSE), and 675-679 (PTGTI). A disulfide bridge connects residues cysteine 199 and cysteine 487. The active-site Proton acceptor is asparagine 474. The active-site Cysteine radical intermediate is the cysteine 476. Glutamate 478 (proton acceptor) is an active-site residue.

This sequence belongs to the ribonucleoside diphosphate reductase class-2 family. Adenosylcob(III)alamin is required as a cofactor.

It carries out the reaction a 2'-deoxyribonucleoside 5'-diphosphate + [thioredoxin]-disulfide + H2O = a ribonucleoside 5'-diphosphate + [thioredoxin]-dithiol. In terms of biological role, catalyzes the reduction of ribonucleotides to deoxyribonucleotides. May function to provide a pool of deoxyribonucleotide precursors for DNA repair during oxygen limitation and/or for immediate growth after restoration of oxygen. This chain is Vitamin B12-dependent ribonucleotide reductase (nrdJ), found in Bradyrhizobium diazoefficiens (strain JCM 10833 / BCRC 13528 / IAM 13628 / NBRC 14792 / USDA 110).